The chain runs to 904 residues: DNA mismatch repair protein MutS (904 aa).

655 to 662 provides a ligand contact to ATP; that stretch reads GPNMGGKS.

Belongs to the DNA mismatch repair MutS family.

Functionally, this protein is involved in the repair of mismatches in DNA. It is possible that it carries out the mismatch recognition step. This protein has a weak ATPase activity. The protein is DNA mismatch repair protein MutS of Rhizorhabdus wittichii (strain DSM 6014 / CCUG 31198 / JCM 15750 / NBRC 105917 / EY 4224 / RW1) (Sphingomonas wittichii).